A 43-amino-acid chain; its full sequence is Protein PsbN (43 aa).

A helical transmembrane segment spans residues 7–29 (ITIFLSGLLVSFTGYALYTAFGQ).

The protein belongs to the PsbN family.

Its subcellular location is the plastid membrane. In terms of biological role, may play a role in photosystem I and II biogenesis. This chain is Protein PsbN, found in Cuscuta reflexa (Southern Asian dodder).